The chain runs to 196 residues: MADS-box transcription factor 32 (196 aa).

Residues 1 to 61 (MGRGRSEIKR…GKLYHFLSPT (61 aa)) enclose the MADS-box domain. Residues 85 to 175 (RQERRAELEK…CDKIAHAQTL (91 aa)) enclose the K-box domain.

Its subcellular location is the nucleus. In terms of biological role, probable transcription factor. This chain is MADS-box transcription factor 32 (MADS32), found in Oryza sativa subsp. japonica (Rice).